Reading from the N-terminus, the 465-residue chain is Mothers against decapentaplegic homolog 5 (465 aa).

The MH1 domain occupies 13-137; that stretch reads PAVKRLLGWK…YKRVESPVLP (125 aa). 4 residues coordinate Zn(2+): Cys-65, Cys-110, Cys-122, and His-127. A disordered region spans residues 163–242; it reads NEPHMPHNAT…MGQDNSQSMD (80 aa). Residues 173–183 are compositionally biased toward polar residues; sequence FPDSFQQPNST. Over residues 198-214 the composition is skewed to low complexity; sequence ASSTYPSSPASSGPSSP. The MH2 domain maps to 271 to 465; sequence WCSIVYYELN…SPLNPISSVS (195 aa).

It belongs to the dwarfin/SMAD family. As to quaternary structure, may form trimers with the co-SMAD SMAD4.

The protein resides in the cytoplasm. It is found in the nucleus. Transcriptional modulator activated by BMP (bone morphogenetic proteins) type 1 receptor kinase. SMAD5 is a receptor-regulated SMAD (R-SMAD). The polypeptide is Mothers against decapentaplegic homolog 5 (SMAD5) (Gallus gallus (Chicken)).